The sequence spans 298 residues: Acetyl-coenzyme A carboxylase carboxyl transferase subunit beta (298 aa).

The 270-residue stretch at 26–295 (LWIKCPETGE…DNANAVVPLA (270 aa)) folds into the CoA carboxyltransferase N-terminal domain.

This sequence belongs to the AccD/PCCB family. Acetyl-CoA carboxylase is a heterohexamer composed of biotin carboxyl carrier protein (AccB), biotin carboxylase (AccC) and two subunits each of ACCase subunit alpha (AccA) and ACCase subunit beta (AccD).

Its subcellular location is the cytoplasm. The catalysed reaction is N(6)-carboxybiotinyl-L-lysyl-[protein] + acetyl-CoA = N(6)-biotinyl-L-lysyl-[protein] + malonyl-CoA. The protein operates within lipid metabolism; malonyl-CoA biosynthesis; malonyl-CoA from acetyl-CoA: step 1/1. Functionally, component of the acetyl coenzyme A carboxylase (ACC) complex. Biotin carboxylase (BC) catalyzes the carboxylation of biotin on its carrier protein (BCCP) and then the CO(2) group is transferred by the transcarboxylase to acetyl-CoA to form malonyl-CoA. The polypeptide is Acetyl-coenzyme A carboxylase carboxyl transferase subunit beta (Agrobacterium fabrum (strain C58 / ATCC 33970) (Agrobacterium tumefaciens (strain C58))).